We begin with the raw amino-acid sequence, 274 residues long: 2,3,4,5-tetrahydropyridine-2,6-dicarboxylate N-succinyltransferase (274 aa).

Substrate contacts are provided by Arg105 and Asp142.

Belongs to the transferase hexapeptide repeat family. Homotrimer.

It localises to the cytoplasm. It catalyses the reaction (S)-2,3,4,5-tetrahydrodipicolinate + succinyl-CoA + H2O = (S)-2-succinylamino-6-oxoheptanedioate + CoA. The protein operates within amino-acid biosynthesis; L-lysine biosynthesis via DAP pathway; LL-2,6-diaminopimelate from (S)-tetrahydrodipicolinate (succinylase route): step 1/3. In Thiobacillus denitrificans (strain ATCC 25259 / T1), this protein is 2,3,4,5-tetrahydropyridine-2,6-dicarboxylate N-succinyltransferase.